The chain runs to 154 residues: Putative pre-16S rRNA nuclease (154 aa).

It belongs to the YqgF nuclease family.

The protein localises to the cytoplasm. Its function is as follows. Could be a nuclease involved in processing of the 5'-end of pre-16S rRNA. The sequence is that of Putative pre-16S rRNA nuclease from Rickettsia rickettsii (strain Iowa).